A 589-amino-acid polypeptide reads, in one-letter code: Serine/threonine-protein phosphatase 2A 65 kDa regulatory subunit A alpha isoform (589 aa).

Ala-2 is subject to N-acetylalanine. HEAT repeat units follow at residues 8 to 46, 47 to 84, 85 to 123, 124 to 161, 162 to 200, 201 to 239, 240 to 278, 279 to 321, 322 to 360, 361 to 399, 400 to 438, 439 to 477, 478 to 516, 517 to 555, and 556 to 589; these read DSLY…GVER, TRSE…GGPE, YVHC…SPSD, LEAH…VSSA, VKAE…ELDN, VKSE…PQED, LEAL…GPEI, TKTD…RENV, IMTQ…GKDN, TIEH…GIRQ, LSQS…GVEF, FDEK…GKEW, AHAT…GQDI, TTKH…DNST, and LQSE…LSLA. An N6-acetyllysine modification is found at Lys-280.

This sequence belongs to the phosphatase 2A regulatory subunit A family. In terms of assembly, PP2A consists of a common heterodimeric core enzyme, composed of PPP2CA a 36 kDa catalytic subunit (subunit C) and PPP2R1A a 65 kDa constant regulatory subunit (PR65 or subunit A), that associates with a variety of regulatory subunits. Proteins that associate with the core dimer include three families of regulatory subunits B (the R2/B/PR55/B55, R3/B''/PR72/PR130/PR59 and R5/B'/B56 families), the 48 kDa variable regulatory subunit, viral proteins, and cell signaling molecules. Found in a complex with at least ARL2, PPP2CB, PPP2R1A, PPP2R2A, PPP2R5E and TBCD. Interacts with the PP2A C catalytic subunit PPP2CA. Interacts with the PP2A B subunit PPP2R2A. Interacts with the PP2A B subunit PPP2R5D. Interacts with FOXO1; the interaction dephosphorylates FOXO1 on AKT-mediated phosphorylation sites. Interacts with IPO9. Interacts with TP53 and SGO1. Interacts with PLA2G16; this interaction might decrease PP2A activity. Interacts with CTTNBP2NL. Interacts with GNA12; the interaction promotes protein phosphatase 2A activation causing dephosphorylation of MAPT. Interacts with CIP2A; this interaction stabilizes CIP2A. Interacts with PABIR1/FAM122A. Interacts with ADCY8; antagonizes interaction between ADCY8 and calmodulin. Interacts with CRTC3 (when phosphorylated at 'Ser-391'). Interacts with SPRY2. Part of the core of STRIPAK complexes composed of PP2A catalytic and scaffolding subunits, the striatins (PP2A regulatory subunits), the striatin-associated proteins MOB4, STRIP1 and STRIP2, PDCD10 and members of the STE20 kinases, such as STK24 and STK26. Component of the Integrator-PP2A (INTAC) complex, composed of the Integrator core complex and protein phosphatase 2A subunits PPP2CA and PPP2R1A.

It is found in the cytoplasm. It localises to the nucleus. Its subcellular location is the chromosome. The protein localises to the centromere. The protein resides in the lateral cell membrane. It is found in the cell projection. It localises to the dendrite. In terms of biological role, the PR65 subunit of protein phosphatase 2A serves as a scaffolding molecule to coordinate the assembly of the catalytic subunit and a variable regulatory B subunit. Upon interaction with GNA12 promotes dephosphorylation of microtubule associated protein TAU/MAPT. Required for proper chromosome segregation and for centromeric localization of SGO1 in mitosis. Together with RACK1 adapter, mediates dephosphorylation of AKT1 at 'Ser-473', preventing AKT1 activation and AKT-mTOR signaling pathway. Dephosphorylation of AKT1 is essential for regulatory T-cells (Treg) homeostasis and stability. Part of the striatin-interacting phosphatase and kinase (STRIPAK) complexes. STRIPAK complexes have critical roles in protein (de)phosphorylation and are regulators of multiple signaling pathways including Hippo, MAPK, nuclear receptor and cytoskeleton remodeling. Different types of STRIPAK complexes are involved in a variety of biological processes such as cell growth, differentiation, apoptosis, metabolism and immune regulation. Key mediator of a quality checkpoint during transcription elongation as part of the Integrator-PP2A (INTAC) complex. The INTAC complex drives premature transcription termination of transcripts that are unfavorably configured for transcriptional elongation: within the INTAC complex, acts as a scaffolding subunit for PPP2CA, which catalyzes dephosphorylation of the C-terminal domain (CTD) of Pol II subunit POLR2A/RPB1 and SUPT5H/SPT5, thereby preventing transcriptional elongation. Regulates the recruitment of the SKA complex to kinetochores. The polypeptide is Serine/threonine-protein phosphatase 2A 65 kDa regulatory subunit A alpha isoform (Ppp2r1a) (Mus musculus (Mouse)).